A 391-amino-acid polypeptide reads, in one-letter code: MDYYDVLGVSKTASPEEIKKSYRKLAVKYHPDKNPGDAEAEKRFKEVSEAYEVLSDPQKRESYDRYGKDGPFAGAGGFGGAGMSNMEDALRTFMGAFGGELGGSGSFFEGLFGGLGEAFGMRGDPAGARQGASKKVHITLTFEEAARGVKKELLVSGYKTCETCSGSGASSKQGIKCCDRCKGSGQVVQSRGFFSMASTCPECGGEGRMITDPCSSCRGQGRIKDKRSVHVQIPAGVDSGMRLKMEGYGDAGQNGAPAGDLYVFIDVEAHPVFERRGDDLILELPIGFVDAALGMKKEVPTLLKEGACRLTVPEGIQSGTILKIKNQGFPNVHGRGRGDLLVRVSVETPQNLSEEQKELLRKFAATEKAENFPKKRSFLDKIKGFFSDLTV.

The region spanning 2 to 67 (DYYDVLGVSK…QKRESYDRYG (66 aa)) is the J domain. The CR-type zinc finger occupies 148–226 (GVKKELLVSG…CRGQGRIKDK (79 aa)). Residues Cys-161, Cys-164, Cys-178, Cys-181, Cys-200, Cys-203, Cys-214, and Cys-217 each coordinate Zn(2+). CXXCXGXG motif repeat units follow at residues 161 to 168 (CETCSGSG), 178 to 185 (CDRCKGSG), 200 to 207 (CPECGGEG), and 214 to 221 (CSSCRGQG).

Belongs to the DnaJ family. As to quaternary structure, homodimer. Requires Zn(2+) as cofactor.

It is found in the cytoplasm. Functionally, participates actively in the response to hyperosmotic and heat shock by preventing the aggregation of stress-denatured proteins and by disaggregating proteins, also in an autonomous, DnaK-independent fashion. Unfolded proteins bind initially to DnaJ; upon interaction with the DnaJ-bound protein, DnaK hydrolyzes its bound ATP, resulting in the formation of a stable complex. GrpE releases ADP from DnaK; ATP binding to DnaK triggers the release of the substrate protein, thus completing the reaction cycle. Several rounds of ATP-dependent interactions between DnaJ, DnaK and GrpE are required for fully efficient folding. Also involved, together with DnaK and GrpE, in the DNA replication of plasmids through activation of initiation proteins. This Chlamydia abortus (strain DSM 27085 / S26/3) (Chlamydophila abortus) protein is Chaperone protein DnaJ.